The chain runs to 736 residues: Melanotransferrin (736 aa).

A signal peptide spans 1–19; the sequence is MRCRSAAMWIFLALRTALG. Transferrin-like domains follow at residues 23–357 and 366–706; these read VRWC…GLLC and LRWC…GMQS. Intrachain disulfides connect C26-C63 and C36-C54. Fe(3+)-binding residues include D78 and Y107. An N-linked (GlcNAc...) asparagine glycan is attached at N118. Intrachain disulfides connect C130–C216, C172–C189, C186–C199, and C257–C271. Residue T132 coordinates hydrogencarbonate. The N-linked (GlcNAc...) asparagine glycan is linked to N135. R136, V138, and G139 together coordinate hydrogencarbonate. Fe(3+) is bound at residue Y210. Residues H279 and Y451 each contribute to the Fe(3+) site. N-linked (GlcNAc...) asparagine glycosylation is present at N515. Position 625 (H625) interacts with Fe(3+). A lipid anchor (GPI-anchor amidated glycine) is attached at G711. Positions 712 to 736 are cleaved as a propeptide — removed in mature form; it reads AAVGAPGASLLPLLPLAVGLLLSSL.

The protein belongs to the transferrin family.

The protein localises to the cell membrane. Involved in iron cellular uptake. Seems to be internalized and then recycled back to the cell membrane. Binds a single atom of iron per subunit. Could also bind zinc. This chain is Melanotransferrin, found in Oryctolagus cuniculus (Rabbit).